A 302-amino-acid chain; its full sequence is Sulfate adenylyltransferase subunit 2 (302 aa).

The protein belongs to the PAPS reductase family. CysD subfamily. In terms of assembly, heterodimer composed of CysD, the smaller subunit, and CysN.

It catalyses the reaction sulfate + ATP + H(+) = adenosine 5'-phosphosulfate + diphosphate. Its pathway is sulfur metabolism; hydrogen sulfide biosynthesis; sulfite from sulfate: step 1/3. Its function is as follows. With CysN forms the ATP sulfurylase (ATPS) that catalyzes the adenylation of sulfate producing adenosine 5'-phosphosulfate (APS) and diphosphate, the first enzymatic step in sulfur assimilation pathway. APS synthesis involves the formation of a high-energy phosphoric-sulfuric acid anhydride bond driven by GTP hydrolysis by CysN coupled to ATP hydrolysis by CysD. The sequence is that of Sulfate adenylyltransferase subunit 2 from Methylococcus capsulatus (strain ATCC 33009 / NCIMB 11132 / Bath).